The following is a 503-amino-acid chain: Probable cytosol aminopeptidase (503 aa).

2 residues coordinate Mn(2+): Lys274 and Asp279. The active site involves Lys286. Mn(2+)-binding residues include Asp297, Asp356, and Glu358. Arg360 is an active-site residue.

Belongs to the peptidase M17 family. Mn(2+) serves as cofactor.

It is found in the cytoplasm. The enzyme catalyses Release of an N-terminal amino acid, Xaa-|-Yaa-, in which Xaa is preferably Leu, but may be other amino acids including Pro although not Arg or Lys, and Yaa may be Pro. Amino acid amides and methyl esters are also readily hydrolyzed, but rates on arylamides are exceedingly low.. It catalyses the reaction Release of an N-terminal amino acid, preferentially leucine, but not glutamic or aspartic acids.. In terms of biological role, presumably involved in the processing and regular turnover of intracellular proteins. Catalyzes the removal of unsubstituted N-terminal amino acids from various peptides. The polypeptide is Probable cytosol aminopeptidase (Burkholderia lata (strain ATCC 17760 / DSM 23089 / LMG 22485 / NCIMB 9086 / R18194 / 383)).